The primary structure comprises 410 residues: Arginine deiminase (410 aa).

Catalysis depends on Cys400, which acts as the Amidino-cysteine intermediate.

The protein belongs to the arginine deiminase family.

The protein localises to the cytoplasm. It catalyses the reaction L-arginine + H2O = L-citrulline + NH4(+). It functions in the pathway amino-acid degradation; L-arginine degradation via ADI pathway; carbamoyl phosphate from L-arginine: step 1/2. The sequence is that of Arginine deiminase from Bacillus cereus (strain G9842).